The following is a 133-amino-acid chain: Interleukin-4 (133 aa).

An N-terminal signal peptide occupies residues 1-24; the sequence is MGLTSQLIPTLVCLLVCTSNFAHG. 3 cysteine pairs are disulfide-bonded: C27/C133, C48/C85, and C70/C105. N-linked (GlcNAc...) asparagine glycosylation is found at N62, N96, N102, and N108.

The protein belongs to the IL-4/IL-13 family.

It localises to the secreted. Participates in at least several B-cell activation processes as well as of other cell types. It is a costimulator of DNA-synthesis. It induces the expression of class II MHC molecules on resting B-cells. It enhances both secretion and cell surface expression of IgE and IgG1. It also regulates the expression of the low affinity Fc receptor for IgE (CD23) on both lymphocytes and monocytes. Positively regulates IL31RA expression in macrophages. Stimulates autophagy in dendritic cells by interfering with mTORC1 signaling and through the induction of RUFY4. This chain is Interleukin-4 (IL4), found in Lama glama (Llama).